Here is a 387-residue protein sequence, read N- to C-terminus: Bifunctional chorismate mutase/prephenate dehydratase (387 aa).

One can recognise a Chorismate mutase domain in the interval 1–92 (MNPDNPLLAL…DSVLTQQALL (92 aa)). Residues arginine 11, arginine 28, lysine 39, aspartate 48, glutamate 52, serine 84, and glutamine 88 each contribute to the substrate site. The Prephenate dehydratase domain maps to 105 to 285 (RIAFLGPKGS…NHTRFIVLAR (181 aa)). One can recognise an ACT domain in the interval 299-376 (TLIMATGQQA…RSLKVLGCYP (78 aa)).

Its subcellular location is the cytoplasm. It catalyses the reaction chorismate = prephenate. The catalysed reaction is prephenate + H(+) = 3-phenylpyruvate + CO2 + H2O. Its pathway is amino-acid biosynthesis; L-phenylalanine biosynthesis; phenylpyruvate from prephenate: step 1/1. It participates in metabolic intermediate biosynthesis; prephenate biosynthesis; prephenate from chorismate: step 1/1. Functionally, catalyzes the Claisen rearrangement of chorismate to prephenate and the decarboxylation/dehydration of prephenate to phenylpyruvate. This is Bifunctional chorismate mutase/prephenate dehydratase (pheA) from Enterobacter agglomerans (Erwinia herbicola).